A 360-amino-acid chain; its full sequence is WAT1-related protein At3g28070 (360 aa).

The next 10 helical transmembrane spans lie at 15–35 (AVFL…STLF), 45–65 (IYPF…PSLF), 84–104 (IGLL…GIEY), 108–128 (TLAS…AIIF), 140–160 (SLAK…VIFY), 190–210 (WLIG…SFIL), 224–244 (VSFL…LVVE), 248–268 (PSVW…MAIV), 286–306 (LYLA…GAIF), and 311–331 (LYLG…AVMW). The 129-residue stretch at 30 to 158 (GISTLFKFAT…LSLIGALVVI (129 aa)) folds into the EamA domain.

It belongs to the drug/metabolite transporter (DMT) superfamily. Plant drug/metabolite exporter (P-DME) (TC 2.A.7.4) family.

It localises to the membrane. The sequence is that of WAT1-related protein At3g28070 from Arabidopsis thaliana (Mouse-ear cress).